A 704-amino-acid polypeptide reads, in one-letter code: Chloride intracellular channel protein 6 (704 aa).

Residues 1–13 (MAEAAEPEGVAPG) show a composition bias toward low complexity. Positions 1 to 446 (MAEAAEPEGV…EDGEASEPRA (446 aa)) are disordered. Over residues 39-48 (EGPEGSEGAE) the composition is skewed to acidic residues. Ser44 bears the Phosphoserine mark. The span at 67 to 83 (RGPEAEARGTRGAHGET) shows a compositional bias: basic and acidic residues. Over residues 90–100 (PEGAEVPQGGE) the composition is skewed to low complexity. The segment covering 121–147 (PRGEAQREPEDSAAPERQEEAEQRPEV) has biased composition (basic and acidic residues). Tandem repeats lie at residues 157–166 (GDSVDAEGPL), 167–176 (GDNIEAEGPA), 177–186 (GDSVEAEGRV), 187–196 (GDSVDAEGPA), 197–206 (GDSVDAEGPL), 207–216 (GDNIQAEGPA), 217–226 (GDSVDAEGRV), 227–236 (GDSVDAEGPA), 237–246 (GDSVDAEGRV), 247–256 (GDSVEAGDPA), 257–266 (GDGVEAGVPA), 267–276 (GDSVEAEGPA), and 277–286 (GDSMDAEGPA). A 13 X 10 AA tandem repeat of G-D-[SNG]-[VIM]-[DEQ]-A-[EAG]-[GDVE]-[PRG]-[LAVP] region spans residues 157 to 282 (GDSVDAEGPL…EGPAGDSMDA (126 aa)). Over residues 295–306 (EPQQSGDGSLSP) the composition is skewed to polar residues. 2 stretches are compositionally biased toward basic and acidic residues: residues 350–360 (ARADAGEDRVG) and 371–385 (EERR…REEE). Phosphoserine is present on residues Ser397 and Ser442. Basic and acidic residues predominate over residues 434-446 (GRREDGEASEPRA). The G-site signature appears at 487-490 (CPFS). Residues 489–509 (FSQRLFMILWLKGVIFNVTTV) traverse the membrane as a helical segment. Residues 556-704 (YPKLGTQHPE…AYSDVAKRMK (149 aa)) form the GST C-terminal domain.

This sequence belongs to the chloride channel CLIC family. As to quaternary structure, monomer (soluble state). Interacts with dopamine receptors DRD2, DRD3 and DRD4. Phosphorylated. As to expression, expressed in brain, placenta, pancreas, liver, lung, heart, kidney, liver, spleen, soleus muscle, and brown fat.

Its subcellular location is the cytoplasm. The protein localises to the cell membrane. The enzyme catalyses chloride(in) = chloride(out). With respect to regulation, channel activity is redox- and pH-regulated. Inhibited by IAA-94. Its function is as follows. In the soluble state, catalyzes glutaredoxin-like thiol disulfide exchange reactions with reduced glutathione as electron donor. Can insert into membranes and form voltage-dependent chloride-selective channels. The channel opens upon membrane depolarization at positive voltages and closes at negative membrane voltages. May play a critical role in water-secreting cells, possibly through the regulation of chloride ion transport. The polypeptide is Chloride intracellular channel protein 6 (Homo sapiens (Human)).